A 468-amino-acid polypeptide reads, in one-letter code: uncharacterized protein (468 aa).

6 consecutive transmembrane segments (helical) span residues 59-79 (IPIV…ALFI), 135-155 (TWIN…LLLV), 215-235 (VFPF…LSIL), 297-317 (THCC…MVLV), 348-368 (HFIP…LVSY), and 385-405 (VFTV…IILF).

It is found in the membrane. This is an uncharacterized protein from Caenorhabditis elegans.